The primary structure comprises 231 residues: Albumin-2 (231 aa).

4 Hemopexin repeats span residues 4–55 (TGYI…FKSL), 62–112 (SYGV…FPFF), 118–166 (ENGI…FPCF), and 172–223 (ESGT…WPSL). Ca(2+) contacts are provided by N8, D66, D122, and D176.

In terms of assembly, monomer and homodimer.

Its subcellular location is the cytoplasm. It localises to the cytosol. May play a role in response to oxidative stress and polyamine biosynthesis. In Pisum sativum (Garden pea), this protein is Albumin-2.